An 834-amino-acid chain; its full sequence is Unextended protein (834 aa).

Positions 1–20 are cleaved as a signal peptide; the sequence is MNTYFISFITIIIFANGING. Residues 21–182 are Extracellular-facing; sequence TSVDTSNKLL…DFLKIKTFEP (162 aa). Residues asparagine 38, asparagine 42, and asparagine 156 are each glycosylated (N-linked (GlcNAc...) asparagine). The region spanning 182–361 is the CNNM transmembrane domain; the sequence is PLIPVWLAII…NDVNDLDKNE (180 aa). The helical transmembrane segment at 183 to 203 threads the bilayer; it reads LIPVWLAIIIIVTCLGFSALF. Topologically, residues 204 to 244 are cytoplasmic; the sequence is SGLNLGLMSMDRTELKILRNTGTEKEKKYASKIAPVRDQGN. Residues 245–265 traverse the membrane as a helical segment; it reads YLLCSILLGNVLVNSTFTILL. The Extracellular portion of the chain corresponds to 266-267; it reads DG. The chain crosses the membrane as a helical span at residues 268–288; it reads LTSGLFAVIFSTLAIVLFGEI. At 289–298 the chain is on the cytoplasmic side; the sequence is TPQAVCSRHG. Residues 299 to 319 traverse the membrane as a helical segment; the sequence is LAIGAKTILVTKTVMAITAPL. Residues 320 to 834 are Extracellular-facing; that stretch reads SYPVSRILDK…DKFESKQSKP (515 aa). CBS domains lie at 380–441 and 448–515; these read MTHI…NTPL and YQNP…IVDE. Asparagine 522 is a glycosylation site (N-linked (GlcNAc...) asparagine). 604–656 is an a nucleoside 3',5'-cyclic phosphate binding site; it reads YIFTQGKAVDFFVLILEGRVEVTIGKEALMFESGPFTYFGTQALVPNVVIDSP. The interval 739–765 is disordered; that stretch reads CFAQNQSTRRLSNRSINSSPTNMNRSP. Polar residues predominate over residues 740 to 763; it reads FAQNQSTRRLSNRSINSSPTNMNR. Residues asparagine 743, asparagine 751, and asparagine 790 are each glycosylated (N-linked (GlcNAc...) asparagine). The disordered stretch occupies residues 807 to 834; sequence SGEQDTTAASMPLLPKLDDKFESKQSKP. The segment covering 822–834 has biased composition (basic and acidic residues); the sequence is KLDDKFESKQSKP.

It belongs to the ACDP family. In terms of assembly, interacts with PRL-1, possibly at the plasma membrane.

It is found in the cell membrane. Probable metal transporter. Acts downstream of PRL-1 and protects the nervous system against olfactory carbon dioxide stimulation. The sequence is that of Unextended protein from Drosophila melanogaster (Fruit fly).